Consider the following 484-residue polypeptide: Protein nucleotidyltransferase YdiU (484 aa).

Residues G92, G94, R95, K115, D127, G128, R178, and R185 each contribute to the ATP site. Residue D258 is the Proton acceptor of the active site. Residues N259 and D268 each coordinate Mg(2+). An ATP-binding site is contributed by D268.

This sequence belongs to the SELO family. The cofactor is Mg(2+). Mn(2+) is required as a cofactor.

It carries out the reaction L-seryl-[protein] + ATP = 3-O-(5'-adenylyl)-L-seryl-[protein] + diphosphate. The enzyme catalyses L-threonyl-[protein] + ATP = 3-O-(5'-adenylyl)-L-threonyl-[protein] + diphosphate. It catalyses the reaction L-tyrosyl-[protein] + ATP = O-(5'-adenylyl)-L-tyrosyl-[protein] + diphosphate. The catalysed reaction is L-histidyl-[protein] + UTP = N(tele)-(5'-uridylyl)-L-histidyl-[protein] + diphosphate. It carries out the reaction L-seryl-[protein] + UTP = O-(5'-uridylyl)-L-seryl-[protein] + diphosphate. The enzyme catalyses L-tyrosyl-[protein] + UTP = O-(5'-uridylyl)-L-tyrosyl-[protein] + diphosphate. Nucleotidyltransferase involved in the post-translational modification of proteins. It can catalyze the addition of adenosine monophosphate (AMP) or uridine monophosphate (UMP) to a protein, resulting in modifications known as AMPylation and UMPylation. The chain is Protein nucleotidyltransferase YdiU from Mycolicibacterium smegmatis (strain ATCC 700084 / mc(2)155) (Mycobacterium smegmatis).